An 85-amino-acid chain; its full sequence is Toxin Cll6 (85 aa).

The first 19 residues, 1 to 19, serve as a signal peptide directing secretion; it reads MNSLLMIIGCLVLIGTVWT. In terms of domain architecture, LCN-type CS-alpha/beta spans 20–83; the sequence is KEGYLVNMKT…TWPLPGKSCS (64 aa). Cystine bridges form between Cys-31–Cys-82, Cys-35–Cys-58, Cys-44–Cys-63, and Cys-48–Cys-65. Ser-83 bears the Serine amide mark.

The protein belongs to the long (4 C-C) scorpion toxin superfamily. Sodium channel inhibitor family. Beta subfamily. In terms of tissue distribution, expressed by the venom gland.

It localises to the secreted. Functionally, beta toxins bind voltage-independently at site-4 of sodium channels (Nav) and shift the voltage of activation toward more negative potentials thereby affecting sodium channel activation and promoting spontaneous and repetitive firing. This chain is Toxin Cll6, found in Centruroides limpidus (Mexican scorpion).